The sequence spans 275 residues: Large ribosomal subunit protein uL2 (275 aa).

A disordered region spans residues V224–K275. The span at K264 to K275 shows a compositional bias: basic and acidic residues.

This sequence belongs to the universal ribosomal protein uL2 family. Part of the 50S ribosomal subunit. Forms a bridge to the 30S subunit in the 70S ribosome.

Functionally, one of the primary rRNA binding proteins. Required for association of the 30S and 50S subunits to form the 70S ribosome, for tRNA binding and peptide bond formation. It has been suggested to have peptidyltransferase activity; this is somewhat controversial. Makes several contacts with the 16S rRNA in the 70S ribosome. This chain is Large ribosomal subunit protein uL2, found in Acetivibrio thermocellus (strain ATCC 27405 / DSM 1237 / JCM 9322 / NBRC 103400 / NCIMB 10682 / NRRL B-4536 / VPI 7372) (Clostridium thermocellum).